A 237-amino-acid chain; its full sequence is MSNLRTLVFFATPPHDCSYLPDREATTMFVDPRAHIDKKLYSQLTALGFRRSGSHYYRPHCESCNACVPVRLQVGQFEPDRNQRRVLRKNADLDCKLVPAAFSERYYRLYAHYIEERHRDGDMYPPSREQFTSFLVEGATDSWFLEMSLDGELVGLAAVDLLDDGLSAIYTVFAPELEHRSLGTFAVLWQIEEAKRRELPHLYLGYWIKECRKMNYKTRFQPIEALRDGHWREMSTD.

It belongs to the R-transferase family. Bpt subfamily.

Its subcellular location is the cytoplasm. The catalysed reaction is N-terminal L-glutamyl-[protein] + L-leucyl-tRNA(Leu) = N-terminal L-leucyl-L-glutamyl-[protein] + tRNA(Leu) + H(+). It catalyses the reaction N-terminal L-aspartyl-[protein] + L-leucyl-tRNA(Leu) = N-terminal L-leucyl-L-aspartyl-[protein] + tRNA(Leu) + H(+). Functionally, functions in the N-end rule pathway of protein degradation where it conjugates Leu from its aminoacyl-tRNA to the N-termini of proteins containing an N-terminal aspartate or glutamate. The chain is Aspartate/glutamate leucyltransferase from Marinobacter nauticus (strain ATCC 700491 / DSM 11845 / VT8) (Marinobacter aquaeolei).